A 200-amino-acid polypeptide reads, in one-letter code: NAD(P)H dehydrogenase (quinone) (200 aa).

The region spanning 4–190 (VLVLYYSTYG…EGARFQGRHV (187 aa)) is the Flavodoxin-like domain. FMN-binding positions include 10 to 15 (STYGHV) and 78 to 80 (TRY). Position 12 (tyrosine 12) interacts with NAD(+). Residue tryptophan 98 coordinates substrate. FMN contacts are provided by residues 113 to 119 (STASQHG) and histidine 134.

It belongs to the WrbA family. It depends on FMN as a cofactor.

It carries out the reaction a quinone + NADH + H(+) = a quinol + NAD(+). It catalyses the reaction a quinone + NADPH + H(+) = a quinol + NADP(+). The protein is NAD(P)H dehydrogenase (quinone) of Methylobacterium radiotolerans (strain ATCC 27329 / DSM 1819 / JCM 2831 / NBRC 15690 / NCIMB 10815 / 0-1).